The chain runs to 101 residues: Small ribosomal subunit protein bS18c (101 aa).

Residues 1-19 show a composition bias toward basic residues; sequence MDKSKQLFRKSKRSFRRRL. Residues 1 to 23 are disordered; that stretch reads MDKSKQLFRKSKRSFRRRLPPIG.

Belongs to the bacterial ribosomal protein bS18 family. In terms of assembly, part of the 30S ribosomal subunit.

The protein localises to the plastid. It localises to the chloroplast. In Acorus calamus (Sweet flag), this protein is Small ribosomal subunit protein bS18c.